A 1024-amino-acid polypeptide reads, in one-letter code: Carbamoyl phosphate synthase large chain (1024 aa).

The segment at 1-396 (MDIKKILVIG…AWQKAVRMID (396 aa)) is carboxyphosphate synthetic domain. Residues Arg125, Arg165, Gly171, Gly172, Lys204, Leu206, Glu211, Gly237, Val238, His239, Gln280, and Glu294 each coordinate ATP. Residues 129-323 (QKAMREAGIP…LAYIAAKLAL (195 aa)) form the ATP-grasp 1 domain. The Mg(2+) site is built by Gln280, Glu294, and Asn296. Positions 280, 294, and 296 each coordinate Mn(2+). An oligomerization domain region spans residues 397–536 (IGEPGLVGGP…LTYGGQYDDK (140 aa)). The segment at 536-917 (KTPGVDYLVV…LKSWLSATPN (382 aa)) is carbamoyl phosphate synthetic domain. The region spanning 660–849 (SKLLDRLGIK…YMSLVADVLT (190 aa)) is the ATP-grasp 2 domain. Residues Arg696, Lys735, Glu742, Gly766, Val767, His768, Ser769, Gln809, and Glu820 each coordinate ATP. Mg(2+)-binding residues include Gln809, Glu820, and Asn822. Mn(2+) is bound by residues Gln809, Glu820, and Asn822. The 108-residue stretch at 917 to 1024 (NKIPSKTALI…KNGKLEVAPW (108 aa)) folds into the MGS-like domain. An allosteric domain region spans residues 918-1024 (KIPSKTALIY…KNGKLEVAPW (107 aa)).

Belongs to the CarB family. In terms of assembly, composed of two chains; the small (or glutamine) chain promotes the hydrolysis of glutamine to ammonia, which is used by the large (or ammonia) chain to synthesize carbamoyl phosphate. Tetramer of heterodimers (alpha,beta)4. It depends on Mg(2+) as a cofactor. Mn(2+) serves as cofactor.

The catalysed reaction is hydrogencarbonate + L-glutamine + 2 ATP + H2O = carbamoyl phosphate + L-glutamate + 2 ADP + phosphate + 2 H(+). It catalyses the reaction hydrogencarbonate + NH4(+) + 2 ATP = carbamoyl phosphate + 2 ADP + phosphate + 2 H(+). The protein operates within amino-acid biosynthesis; L-arginine biosynthesis; carbamoyl phosphate from bicarbonate: step 1/1. It participates in pyrimidine metabolism; UMP biosynthesis via de novo pathway; (S)-dihydroorotate from bicarbonate: step 1/3. Its function is as follows. Large subunit of the glutamine-dependent carbamoyl phosphate synthetase (CPSase). CPSase catalyzes the formation of carbamoyl phosphate from the ammonia moiety of glutamine, carbonate, and phosphate donated by ATP, constituting the first step of 2 biosynthetic pathways, one leading to arginine and/or urea and the other to pyrimidine nucleotides. The large subunit (synthetase) binds the substrates ammonia (free or transferred from glutamine from the small subunit), hydrogencarbonate and ATP and carries out an ATP-coupled ligase reaction, activating hydrogencarbonate by forming carboxy phosphate which reacts with ammonia to form carbamoyl phosphate. In Pyrobaculum aerophilum (strain ATCC 51768 / DSM 7523 / JCM 9630 / CIP 104966 / NBRC 100827 / IM2), this protein is Carbamoyl phosphate synthase large chain.